The primary structure comprises 112 residues: UPF0060 membrane protein SCO3297 (112 aa).

Transmembrane regions (helical) follow at residues 8–28, 33–53, 62–82, and 88–108; these read ALFV…WQGV, GWLW…VATF, ILAA…VVAD, and RWDI…MWAP.

This sequence belongs to the UPF0060 family.

Its subcellular location is the cell membrane. This is UPF0060 membrane protein SCO3297 from Streptomyces coelicolor (strain ATCC BAA-471 / A3(2) / M145).